We begin with the raw amino-acid sequence, 475 residues long: Methyltransferase-like protein 25B (475 aa).

A coiled-coil region spans residues 186-210 (QRLVERAQRLDQELLQTLEKEEKRN). A helical transmembrane segment spans residues 406–426 (VVAFFSLALLLAPLVETLILL).

This sequence belongs to the METTL25 family.

The protein localises to the membrane. This is Methyltransferase-like protein 25B from Bos taurus (Bovine).